Consider the following 229-residue polypeptide: Heptaprenylglyceryl phosphate synthase (229 aa).

K12 is a binding site for sn-glycerol 1-phosphate. 2 residues coordinate Mg(2+): D14 and S40. Sn-glycerol 1-phosphate is bound by residues 159-164, G189, and 209-210; these read YLEYSG and GN.

Belongs to the GGGP/HepGP synthase family. Group I subfamily. As to quaternary structure, homodimer. Mg(2+) is required as a cofactor.

The catalysed reaction is sn-glycerol 1-phosphate + all-trans-heptaprenyl diphosphate = 3-heptaprenyl-sn-glycero-1-phosphate + diphosphate. It participates in membrane lipid metabolism; glycerophospholipid metabolism. Functionally, prenyltransferase that catalyzes in vivo the transfer of the heptaprenyl moiety of heptaprenyl pyrophosphate (HepPP; 35 carbon atoms) to the C3 hydroxyl of sn-glycerol-1-phosphate (G1P), producing heptaprenylglyceryl phosphate (HepGP). This reaction is an ether-bond-formation step in the biosynthesis of archaea-type G1P-based membrane lipids found in Bacillales. The polypeptide is Heptaprenylglyceryl phosphate synthase (Bacillus velezensis (strain DSM 23117 / BGSC 10A6 / LMG 26770 / FZB42) (Bacillus amyloliquefaciens subsp. plantarum)).